Here is a 287-residue protein sequence, read N- to C-terminus: Bifunctional protein FolD (287 aa).

Residues 166-168 (GAS) and I232 each bind NADP(+).

The protein belongs to the tetrahydrofolate dehydrogenase/cyclohydrolase family. In terms of assembly, homodimer.

It carries out the reaction (6R)-5,10-methylene-5,6,7,8-tetrahydrofolate + NADP(+) = (6R)-5,10-methenyltetrahydrofolate + NADPH. The catalysed reaction is (6R)-5,10-methenyltetrahydrofolate + H2O = (6R)-10-formyltetrahydrofolate + H(+). It participates in one-carbon metabolism; tetrahydrofolate interconversion. Catalyzes the oxidation of 5,10-methylenetetrahydrofolate to 5,10-methenyltetrahydrofolate and then the hydrolysis of 5,10-methenyltetrahydrofolate to 10-formyltetrahydrofolate. The polypeptide is Bifunctional protein FolD (Aeromonas salmonicida (strain A449)).